Here is a 381-residue protein sequence, read N- to C-terminus: uncharacterized protein (381 aa).

The helical transmembrane segment at 3-23 (GAVAGLVFLAVLVIFAIIVVA) threads the bilayer.

It belongs to the band 7/mec-2 family.

It localises to the membrane. This is an uncharacterized protein from Mycobacterium bovis (strain ATCC BAA-935 / AF2122/97).